The sequence spans 179 residues: Signal peptidase complex subunit 2 (179 aa).

Topologically, residues 1 to 48 (MSGNNVQEEDSTFHVSNLYSETEIKKITQDFISEKIREQNFEEIVKYS) are cytoplasmic. A helical membrane pass occupies residues 49–69 (NIRIFLSLVLIVIGTYCSIFV). Residues 70 to 74 (QYKKN) lie on the Extracellular side of the membrane. A helical transmembrane segment spans residues 75–95 (PVIMIQLLVAFFVVSTTLIIF). The Cytoplasmic portion of the chain corresponds to 96-179 (EYFFFDDVFM…AHGRTLKLKN (84 aa)).

Belongs to the SPCS2 family. As to quaternary structure, component of the signal peptidase complex (SPC) composed of a catalytic subunit SEC11/SPC21 and three accessory subunits SPC25, SPC3/SPC22, SPC1/SPC12. The complex induces a local thinning of the ER membrane which is used to measure the length of the signal peptide (SP) h-region of protein substrates. This ensures the selectivity of the complex towards h-regions shorter than 18-20 amino acids. Within the complex, interacts with SEC11/SPC21. Component of a complex composed of SPC25 and PMV; the interaction is mediated via the transmembrane domains. The complex interacts with the SEC61 channel-forming translocon complex and is involved in the recognition and import of PEXEL motif-containing proteins into the ER for subsequent export.

The protein resides in the endoplasmic reticulum membrane. Its function is as follows. Component of the signal peptidase complex (SPC) which catalyzes the cleavage of N-terminal signal sequences from nascent proteins as they are translocated into the lumen of the endoplasmic reticulum. Enhances the enzymatic activity of SPC and facilitates the interactions between different components of the translocation site. Also, regulatory component of the CSP25-plasmepsin PMV complex which cleaves the pentameric localization motif RxLxE/Q/D (termed Plasmodium export element (PEXEL)) located downstream of the N-terminal secretory signal sequence of several proteins. The sequence is that of Signal peptidase complex subunit 2 from Plasmodium falciparum (isolate 3D7).